Here is a 522-residue protein sequence, read N- to C-terminus: Leucine-rich repeat transmembrane neuronal protein 1 (522 aa).

The N-terminal stretch at 1 to 34 (MDFLLLGLCLHWLLRRPSGVVLCLLGACFQMLPA) is a signal peptide. The LRRNT domain occupies 35–63 (APSGCPGQCRCEGRLLYCEALNLTEAPHN). The Extracellular segment spans residues 35–427 (APSGCPGQCR…HAENAVQIHK (393 aa)). Asn56 and Asn63 each carry an N-linked (GlcNAc...) asparagine glycan. LRR repeat units lie at residues 64-87 (LSGL…QFTG), 89-111 (MQLT…AFQK), 112-135 (LRRV…TFRP), 136-159 (MPNL…LFHG), 161-183 (RKLT…IFQD), 184-207 (CRSL…SFAG), 209-231 (FKLT…HFPR), 233-255 (ISLH…LDWV), 256-278 (WNLE…VFET), and 280-302 (PYLQ…ILNS). N-linked (GlcNAc...) asparagine glycosylation occurs at Asn130. In terms of domain architecture, LRRCT spans 314 to 365 (NLWDCGRNVCALASWLSNFQGRYDANLQCASPEYAQGEDVLDAVYAFHLCED). Asn381 carries N-linked (GlcNAc...) asparagine glycosylation. A helical transmembrane segment spans residues 428–448 (VVTGTMALIFSFLIVVLVLYV). The Cytoplasmic segment spans residues 449–522 (SWKCFPASLR…HQQPARECEV (74 aa)).

It belongs to the LRRTM family. In terms of tissue distribution, expressed predominantly in the nervous system by postmitotic neurons, but also in some non-neuronal tissues. In adult brain expression is most prominent in the forebraain, particularly in the thalamus and in the cortical areas including hippocampus, piriform and posterior cingulate.

The protein localises to the cell membrane. It is found in the postsynaptic cell membrane. Functionally, exhibits strong synaptogenic activity, restricted to excitatory presynaptic differentiation, acting at both pre- and postsynaptic level. The chain is Leucine-rich repeat transmembrane neuronal protein 1 (Lrrtm1) from Mus musculus (Mouse).